Reading from the N-terminus, the 691-residue chain is WD repeat-containing protein 48 homolog (691 aa).

WD repeat units follow at residues 27-82 (LHRS…PVQY), 88-130 (RHTD…YLDS), 133-168 (LHTDYVSCLAYAPLAEKVVSASFDRNIFVYDVNSNF), 180-219 (GCKNSIYSLATTPNLSHCLFFSPHQQIRMFDPRTNDKPMK), 222-261 (GHSDNVRALLLNDDGTRALSAGSDGTIRLWDIGMQKNIAT), 264-303 (AHEEGVWTIQVDASFKFVYSGGRDRYVLKSPVNDLSKFQV), 306-347 (KEEA…QNSN), and 399-438 (SGAPAINKYKILNDKRHVLTSDTEDNVALYDVLAGKKVKE).

Belongs to the WD repeat WDR48 family. In terms of assembly, interacts with usp-46; the interaction increases the catalytic activity of usp-46 in the presence of wdr-20.

Functionally, together with wdr-20, binds to and stimulates the activity of the deubiquitinating enzyme usp-46, leading to deubiquitination and stabilization of the glr-1 glutamate receptor. The chain is WD repeat-containing protein 48 homolog (wdr-48) from Caenorhabditis briggsae.